The chain runs to 86 residues: Elicitor peptide 5 (86 aa).

Residues Met-1 to Arg-59 constitute a propeptide that is removed on maturation. Positions Ser-31–Met-86 are disordered. Over residues Val-39 to Pro-51 the composition is skewed to basic and acidic residues.

The protein belongs to the brassicaceae elicitor peptide family.

Functionally, elicitor of plant defense. This Arabidopsis thaliana (Mouse-ear cress) protein is Elicitor peptide 5 (PEP5).